A 299-amino-acid chain; its full sequence is Dihydroorotate dehydrogenase B (NAD(+)), catalytic subunit (299 aa).

FMN-binding positions include serine 21 and 44–45; that span reads KS. Substrate contacts are provided by residues lysine 44, 68-72, and asparagine 125; that span reads NAVGL. Position 125 (asparagine 125) interacts with FMN. Cysteine 128 acts as the Nucleophile in catalysis. Lysine 163 contacts FMN. 189–190 is a substrate binding site; it reads NT. FMN is bound by residues glycine 214, 240-241, and 262-263; these read GG and GS.

This sequence belongs to the dihydroorotate dehydrogenase family. Type 1 subfamily. Heterotetramer of 2 PyrK and 2 PyrD type B subunits. FMN serves as cofactor.

It localises to the cytoplasm. The enzyme catalyses (S)-dihydroorotate + NAD(+) = orotate + NADH + H(+). The protein operates within pyrimidine metabolism; UMP biosynthesis via de novo pathway; orotate from (S)-dihydroorotate (NAD(+) route): step 1/1. Its function is as follows. Catalyzes the conversion of dihydroorotate to orotate with NAD(+) as electron acceptor. In Archaeoglobus fulgidus (strain ATCC 49558 / DSM 4304 / JCM 9628 / NBRC 100126 / VC-16), this protein is Dihydroorotate dehydrogenase B (NAD(+)), catalytic subunit (pyrD).